The sequence spans 263 residues: Putative hydro-lyase Psyc_1103 (263 aa).

The protein belongs to the D-glutamate cyclase family.

This is Putative hydro-lyase Psyc_1103 from Psychrobacter arcticus (strain DSM 17307 / VKM B-2377 / 273-4).